The primary structure comprises 332 residues: Inositol 2-dehydrogenase 2 (332 aa).

The protein belongs to the Gfo/Idh/MocA family. As to quaternary structure, homotetramer.

The enzyme catalyses myo-inositol + NAD(+) = scyllo-inosose + NADH + H(+). Involved in the oxidation of myo-inositol (MI) to 2-keto-myo-inositol (2KMI or 2-inosose). This chain is Inositol 2-dehydrogenase 2, found in Paenarthrobacter aurescens (strain TC1).